The following is a 637-amino-acid chain: Chaperone protein HtpG (637 aa).

The interval 1–347 (MTQSVHAETH…SNDLPLNVSR (347 aa)) is a; substrate-binding. The b stretch occupies residues 348 to 564 (EILQDNKVTV…NHGMSTQMIK (217 aa)). The c stretch occupies residues 565–637 (LMRAAGQPVP…SRINRLLLQA (73 aa)).

The protein belongs to the heat shock protein 90 family. Homodimer.

It localises to the cytoplasm. In terms of biological role, molecular chaperone. Has ATPase activity. The polypeptide is Chaperone protein HtpG (Aeromonas salmonicida (strain A449)).